An 83-amino-acid polypeptide reads, in one-letter code: Large ribosomal subunit protein bL31 (83 aa).

It belongs to the bacterial ribosomal protein bL31 family. Type A subfamily. Part of the 50S ribosomal subunit.

In terms of biological role, binds the 23S rRNA. This chain is Large ribosomal subunit protein bL31, found in Synechococcus sp. (strain CC9605).